Here is a 1001-residue protein sequence, read N- to C-terminus: MTTKNNKQLKSVLFMFLLLIGAYVKAQEKNVSGTVTSSEDGMMLPGVNIIVKGTASGTTSDFDGNYNIEVPDSNAILQFNYLGFVTQEIKVGAQTNISVVLQVDQNELEEIVVIGYGTVKKSDVSGSVSSVKSAELTAYPTVSAEQALQGRAAGVQVQSNNGGEPGAPIKVRIRGGTSINASSDALIVVDGFVGASMPAPQDIASMEVLKDASATAIYGSRGANGVIMVTTKKGTSSKPTLELNTSYSLQHVNNTIDLLDADEFATYRQAYSENYVQGPANTDWQDEIYTTGSISNTQLAFSGGSDNSKYYISGNYFAQDGVVINSNLERFTILSNVDVDITKRFKVGLNVFGGRSTKDGVSTQAQTGGTGGGDVISSAYRFAPDLGIYNADGTYTINSLGDDIDNPYALATESVDERKADTYRANFYAAYEFIDGLEFKTTFGFSSENTQIGKFKPTTILAGAGVGGEATFEYRNTTNTLSENYLTYNKSFGAHNLSLLGGYSYQKVQNEGAFAGARSFVTNEVSYRNLEGGAVTMQPSSYLNETELVSVFGRVNYEYASKYIFTFTARRDGSSNFSKNNKYAFFPSGAIAWNMAKENFLKDSNTITTWKWRASYGATGNPSISPYETLAKFSSVYAVVGDQQVNGVVLTDFANDNLKWETSKQLDLGLDVALFDNRLELSFDYYTIKTEDLLFPRPLPEYSGVSSQIQNIGELENKGYEFSINSRNITNQDFTWSTAFNFSRNKNKMVKLPDGDDLFIDSAPGHFLQRQTQILREGEAIGSFYGYEYKGVYQGGNFPEGTATLSGDSDPGGELFADLDGNGEISTADRKIIGDPTPDFTMGFNNDLRYKNFDMNLFFQASVGGEILNYTLLELGSGAANSTADMVNAWSPTNTNTDVPRPAVREKRITSRYVYDGSYVRLKNLSFGYNLPESFLGKTGLQTVRLYVSGQNLLTFTDYPGADPEANYRNDNNQRSNTNIGLDYGSYPNVRTFTMGLNMKF.

A signal peptide spans 1–26 (MTTKNNKQLKSVLFMFLLLIGAYVKA). The TonB box motif lies at 109–116 (EEIVVIGY). One can recognise a TBDR plug domain in the interval 120 to 232 (KKSDVSGSVS…ANGVIMVTTK (113 aa)). The TBDR beta-barrel domain maps to 238-1001 (KPTLELNTSY…TFTMGLNMKF (764 aa)). The TonB C-terminal box motif lies at 984–1001 (YGSYPNVRTFTMGLNMKF).

This sequence belongs to the TonB-dependent receptor family.

The protein resides in the cell outer membrane. In terms of biological role, tonB-dependent receptor probably involved in ulvan degradation. Ulvan is the main polysaccharide component of the Ulvales (green seaweed) cell wall. It is composed of disaccharide building blocks comprising 3-sulfated rhamnose (Rha3S) linked to D-glucuronic acid (GlcA), L-iduronic acid (IduA), or D-xylose (Xyl). The TonB-dependent receptor may mediate transport of ulvan oligosaccharides from the surface of the outer membrane to the periplasm for subsequent degradation. This chain is TonB-dependent receptor P3, found in Formosa agariphila (strain DSM 15362 / KCTC 12365 / LMG 23005 / KMM 3901 / M-2Alg 35-1).